We begin with the raw amino-acid sequence, 182 residues long: Small ribosomal subunit protein uS4c (182 aa).

Residues 82 to 143 (MRLDNILFRL…KQRSKALIQN (62 aa)) enclose the S4 RNA-binding domain.

Belongs to the universal ribosomal protein uS4 family. Part of the 30S ribosomal subunit. Contacts protein S5. The interaction surface between S4 and S5 is involved in control of translational fidelity.

It localises to the plastid. The protein localises to the chloroplast. Its function is as follows. One of the primary rRNA binding proteins, it binds directly to 16S rRNA where it nucleates assembly of the body of the 30S subunit. With S5 and S12 plays an important role in translational accuracy. This Libertia formosa (Snowy mermaid) protein is Small ribosomal subunit protein uS4c (rps4).